The chain runs to 284 residues: MTAKLIDGKAIAASLRQQIAKRVAERSQQGLRTPGLAVILVGSDPASQVYVSHKRKDCEEVGFISQAYDLPADTTQAALTDLIDRLNEDAAVDGVLLQLPLPAHLDASLLLERIRPDKDVDGFHPYNVGRLAQRIPLLRPCTPKGIMTLLESTGVDLYGLDAVVVGASNIVGRPMAMELLLAGCTVTVTHRFTRDLAGHVGRADLVVVAAGKPGLVKGEWIKPGAIVIDVGINRQEDGKLVGDVVYETALPRAGWITPVPGGVGPMTRACLLENTLYAAETLHD.

NADP(+)-binding positions include 166–168 and isoleucine 232; that span reads GAS.

The protein belongs to the tetrahydrofolate dehydrogenase/cyclohydrolase family. As to quaternary structure, homodimer.

It catalyses the reaction (6R)-5,10-methylene-5,6,7,8-tetrahydrofolate + NADP(+) = (6R)-5,10-methenyltetrahydrofolate + NADPH. The enzyme catalyses (6R)-5,10-methenyltetrahydrofolate + H2O = (6R)-10-formyltetrahydrofolate + H(+). The protein operates within one-carbon metabolism; tetrahydrofolate interconversion. Functionally, catalyzes the oxidation of 5,10-methylenetetrahydrofolate to 5,10-methenyltetrahydrofolate and then the hydrolysis of 5,10-methenyltetrahydrofolate to 10-formyltetrahydrofolate. In Pseudomonas syringae pv. syringae (strain B728a), this protein is Bifunctional protein FolD 1.